Consider the following 207-residue polypeptide: Large ribosomal subunit protein uL4 (207 aa).

The disordered stretch occupies residues 54 to 76 (RSAVRGGGRKPWRQKGTGRARQG). The segment covering 60-71 (GGRKPWRQKGTG) has biased composition (basic residues).

This sequence belongs to the universal ribosomal protein uL4 family. In terms of assembly, part of the 50S ribosomal subunit.

Functionally, one of the primary rRNA binding proteins, this protein initially binds near the 5'-end of the 23S rRNA. It is important during the early stages of 50S assembly. It makes multiple contacts with different domains of the 23S rRNA in the assembled 50S subunit and ribosome. Its function is as follows. Forms part of the polypeptide exit tunnel. This Staphylococcus haemolyticus (strain JCSC1435) protein is Large ribosomal subunit protein uL4.